Consider the following 311-residue polypeptide: MRKIIIGSRRSQLALTQTEWVISKLKEAGAPFDFEIKKIITKGDQILDVTLSKVGGKGLFVKEIEQAMANKEIDIAVHSMKDVPSVLQEGFALGATTTRVDPRDALISNEGYTLAELPAGSIVGTSSLRRSAQILAKRPDLEVKWIRGNIETRLRKLKEEDFDAIILAAAGLERMGWSNEIVTEYLDPDLCVPAVGQGALGIECRADDDEVLEMLKTINDDTTAKTVLAERTFLHRMEGGCQVPIAGYATLTDEGEIELTALVGTPDGEQIFKEILRGKDPVQLGETMAQALMDQGAKEVLEQVKKGLESQ.

At C241 the chain carries S-(dipyrrolylmethanemethyl)cysteine.

It belongs to the HMBS family. In terms of assembly, monomer. Requires dipyrromethane as cofactor.

It carries out the reaction 4 porphobilinogen + H2O = hydroxymethylbilane + 4 NH4(+). Its pathway is porphyrin-containing compound metabolism; protoporphyrin-IX biosynthesis; coproporphyrinogen-III from 5-aminolevulinate: step 2/4. Its function is as follows. Tetrapolymerization of the monopyrrole PBG into the hydroxymethylbilane pre-uroporphyrinogen in several discrete steps. The chain is Porphobilinogen deaminase (hemC) from Halalkalibacterium halodurans (strain ATCC BAA-125 / DSM 18197 / FERM 7344 / JCM 9153 / C-125) (Bacillus halodurans).